A 930-amino-acid polypeptide reads, in one-letter code: Isoleucine--tRNA ligase (930 aa).

The 'HIGH' region signature appears at 57 to 67 (PYANGHLHIGH). Glu573 provides a ligand contact to L-isoleucyl-5'-AMP. Residues 614–618 (KMSKS) carry the 'KMSKS' region motif. ATP is bound at residue Lys617. Zn(2+) contacts are provided by Cys902, Cys905, Cys918, and Cys921.

Belongs to the class-I aminoacyl-tRNA synthetase family. IleS type 1 subfamily. In terms of assembly, monomer. The cofactor is Zn(2+).

It localises to the cytoplasm. It catalyses the reaction tRNA(Ile) + L-isoleucine + ATP = L-isoleucyl-tRNA(Ile) + AMP + diphosphate. Catalyzes the attachment of isoleucine to tRNA(Ile). As IleRS can inadvertently accommodate and process structurally similar amino acids such as valine, to avoid such errors it has two additional distinct tRNA(Ile)-dependent editing activities. One activity is designated as 'pretransfer' editing and involves the hydrolysis of activated Val-AMP. The other activity is designated 'posttransfer' editing and involves deacylation of mischarged Val-tRNA(Ile). This Helicobacter hepaticus (strain ATCC 51449 / 3B1) protein is Isoleucine--tRNA ligase.